The following is a 350-amino-acid chain: UDP-glucose 4-epimerase GEPI48 (350 aa).

5–36 contributes to the NAD(+) binding site; it reads TVLVTGGAGYIGSHTVLQLLLGGFKAVVVDNL. Residue S130 participates in substrate binding. The active-site Proton acceptor is the Y154.

It belongs to the NAD(P)-dependent epimerase/dehydratase family. NAD(+) is required as a cofactor.

The enzyme catalyses UDP-alpha-D-glucose = UDP-alpha-D-galactose. It participates in carbohydrate metabolism; galactose metabolism. This Cyamopsis tetragonoloba (Guar) protein is UDP-glucose 4-epimerase GEPI48.